The following is a 322-amino-acid chain: MIDELISIIGIPALAFAISTYIPGIQRKIEARIQQRIGPSILAPGFWAFFKFLFKETKAPDANLPKLYNLLPLLSIVVLWALLSITSLTSFHILSNEIGIVGLLKLEEMMYVILGSLAFSIMGWKMPFIDECKGTPFIKTLKLSLEQLGAVRSFKMITIGSFPFYLATFLPFVQKKSIFLKDIVGEPFLFSLAGIFGAACYFIGYVIMIKEYPFSITHTKADVIEGPTMELIAKYRALYLASKELLLIALGSLFATLYLGIAPDIENPITIVENFAIALIFPILATFVRAFSPVLLFKQIYPISYVATLIGVIGFIFALLGW.

9 consecutive transmembrane segments (helical) span residues 5–25, 37–57, 71–91, 109–129, 153–173, 189–209, 245–265, 268–288, and 300–320; these read LISI…IPGI, IGPS…FKET, LPLL…LTSF, MMYV…MPFI, SFKM…LPFV, LFSL…VIMI, LLLI…APDI, PITI…ATFV, and IYPI…FALL.

It is found in the cell membrane. This is an uncharacterized protein from Methanocaldococcus jannaschii (strain ATCC 43067 / DSM 2661 / JAL-1 / JCM 10045 / NBRC 100440) (Methanococcus jannaschii).